Here is an 895-residue protein sequence, read N- to C-terminus: Probable methyltransferase PMT27 (895 aa).

At 1–16 (MAFGRGRGNKRTSTSS) the chain is on the cytoplasmic side. A helical; Signal-anchor for type II membrane protein membrane pass occupies residues 17–37 (YASTITMVIFVALCVFGVWML). Residues 38–895 (SSNSVIPPQI…KGFWRPETSQ (858 aa)) lie on the Lumenal side of the membrane. Positions 43–52 (IPPQITQGST) are enriched in polar residues. The segment at 43–362 (IPPQITQGST…QRQTSESNTV (320 aa)) is disordered. Residues 90 to 114 (NPGKLPDDAVKSEDEQRKSAKEKSE) are compositionally biased toward basic and acidic residues. Positions 115 to 127 (TTSSKTQTQETQQ) are enriched in low complexity. A compositionally biased stretch (basic and acidic residues) spans 129–143 (NDDKISEEKEKDNGK). Asn-145 is a glycosylation site (N-linked (GlcNAc...) asparagine). The segment covering 154–174 (GQMKKVVKEFEKEQKQQRDED) has biased composition (basic and acidic residues). Low complexity predominate over residues 176–191 (GTQPKGTQGQEQGQGK). Composition is skewed to polar residues over residues 199–232 (GNKQ…GETS) and 243–256 (PEEQ…TGQQ). Residues 257–320 (NEEKTTASEE…RKDEKKHEQG (64 aa)) show a composition bias toward basic and acidic residues. Over residues 337 to 346 (SQKSWKSQAT) the composition is skewed to polar residues. Residues Asn-375 and Asn-709 are each glycosylated (N-linked (GlcNAc...) asparagine).

The protein belongs to the methyltransferase superfamily.

The protein localises to the endoplasmic reticulum membrane. This is Probable methyltransferase PMT27 from Arabidopsis thaliana (Mouse-ear cress).